The primary structure comprises 59 residues: Large ribosomal subunit protein uL30 (59 aa).

It belongs to the universal ribosomal protein uL30 family. Part of the 50S ribosomal subunit.

This is Large ribosomal subunit protein uL30 from Clostridium botulinum (strain ATCC 19397 / Type A).